Here is a 327-residue protein sequence, read N- to C-terminus: Tumor necrosis factor receptor superfamily member 6 (327 aa).

Positions 1-21 (MLWIWAVLPLVLAGSQLRVHT) are cleaved as a signal peptide. The Extracellular segment spans residues 22–169 (QGTNSISESL…NCRKQSPRNR (148 aa)). Asparagine 43 carries N-linked (GlcNAc...) asparagine glycosylation. TNFR-Cys repeat units lie at residues 43–79 (NCSE…PTCA), 80–123 (PCTE…NTKC), and 124–162 (KCKP…TNCR). Cystine bridges form between cysteine 44–cysteine 55, cysteine 56–cysteine 69, cysteine 59–cysteine 78, cysteine 81–cysteine 97, cysteine 100–cysteine 115, cysteine 103–cysteine 123, cysteine 125–cysteine 139, cysteine 142–cysteine 153, and cysteine 145–cysteine 161. N-linked (GlcNAc...) asparagine glycosylation occurs at asparagine 114. Residues 170 to 186 (LWLLTILVLLIPLVFIY) traverse the membrane as a helical segment. The Cytoplasmic segment spans residues 187–327 (RKYRKRKCWK…GNENEGQCLE (141 aa)). Residue cysteine 194 is the site of S-palmitoyl cysteine attachment. Positions 204–309 (SRTSSRETIP…DKFQDMVQKD (106 aa)) are interaction with HIPK3. Threonine 206 carries the phosphothreonine modification. 2 positions are modified to phosphoserine: serine 217 and serine 220. The interaction with CALM stretch occupies residues 222–246 (SKYIPRIAEDMTIQEAKKFARENNI). The Death domain maps to 222–306 (SKYIPRIAED…RTLDKFQDMV (85 aa)). The interval 308-327 (KDLGKSTPDTGNENEGQCLE) is disordered. Threonine 314 carries the post-translational modification Phosphothreonine. Over residues 314–327 (TPDTGNENEGQCLE) the composition is skewed to polar residues.

As to quaternary structure, component of the death-induced signaling complex (DISC) composed of cell surface receptor FAS/CD95, adapter protein FADD and the CASP8 protease; recruitment of CASP8 to the complex is required for processing of CASP8 into the p18 and p10 subunits. Interacts directly (via DED domain) with NOL3 (via CARD domain); inhibits death-inducing signaling complex (DISC) assembly by inhibiting the increase in FAS-FADD binding induced by FAS activation. Binds DAXX. Interacts with HIPK3. Part of a complex containing HIPK3 and FADD. Binds RIPK1 and FAIM2. Interacts with BABAM2 and FEM1B. Interacts with CALM. In the absence of stimulation, interacts with BIRC2, DDX3X and GSK3B. The interaction with BIRC2 and DDX3X is further enhanced upon receptor stimulation and accompanied by DDX3X and BIRC2 cleavage. In terms of processing, palmitoylated. Palmitoylation by ZDHHC7 prevents the lysosomal degradation of FAS regulating its expression at the plasma membrane. Detected in various tissues including thymus, liver, lung, heart, and adult ovary.

It is found in the cell membrane. Its subcellular location is the membrane raft. Receptor for TNFSF6/FASLG. The adapter molecule FADD recruits caspase CASP8 to the activated receptor. The resulting death-inducing signaling complex (DISC) performs CASP8 proteolytic activation which initiates the subsequent cascade of caspases (aspartate-specific cysteine proteases) mediating apoptosis. FAS-mediated apoptosis may have a role in the induction of peripheral tolerance, in the antigen-stimulated suicide of mature T-cells, or both. This Mus musculus (Mouse) protein is Tumor necrosis factor receptor superfamily member 6 (Fas).